Consider the following 263-residue polypeptide: Phosphatidylglycerol--prolipoprotein diacylglyceryl transferase (263 aa).

4 helical membrane-spanning segments follow: residues 16 to 36 (LAVSWYSLSYVVGILFGWFYA), 55 to 75 (FVTYAIIGIIVGGRLGYILLY), 92 to 112 (EGGMSFHGGAIGVIIAAYIFC), and 117 to 137 (LNFLSLTDIIAPVVPIGLFFG). Residue Arg-138 participates in a 1,2-diacyl-sn-glycero-3-phospho-(1'-sn-glycerol) binding. The next 3 membrane-spanning stretches (helical) occupy residues 172 to 192 (QLYEAFFEGLVLFCILAYAVF), 201 to 221 (GLNSGLFLMFYSLFRIIIEIF), and 234 to 254 (SLTMGQILSMPLLLLGIYLII).

This sequence belongs to the Lgt family.

It localises to the cell inner membrane. It carries out the reaction L-cysteinyl-[prolipoprotein] + a 1,2-diacyl-sn-glycero-3-phospho-(1'-sn-glycerol) = an S-1,2-diacyl-sn-glyceryl-L-cysteinyl-[prolipoprotein] + sn-glycerol 1-phosphate + H(+). It functions in the pathway protein modification; lipoprotein biosynthesis (diacylglyceryl transfer). Its function is as follows. Catalyzes the transfer of the diacylglyceryl group from phosphatidylglycerol to the sulfhydryl group of the N-terminal cysteine of a prolipoprotein, the first step in the formation of mature lipoproteins. This chain is Phosphatidylglycerol--prolipoprotein diacylglyceryl transferase, found in Rickettsia bellii (strain OSU 85-389).